A 290-amino-acid chain; its full sequence is MYFQDIISSLNNFWSEKGCLLLQPYDLEKGAGTMSPHSFLRAIGPEPWAVAYPEPCRRPTDGRYGDNPNRAQHYFQYQVLIKPSLDGIQEIYLSSLEALGISAKDHDIRFVEDNWESPTLGAWGVGWEVWLDGMEVTQFTYFQQCGGLDCKPVSIEITYGLERLAMYLQNVESIWDLSWNKKTKYGDIWLPFETGQCKYNFEESNSENLRKLFEIYEEEAHQLIAKKLPAPCLDYVLKCSHTFNLLEARGVISVTERTKIIARIRSLARKVAEAWLEERESLGFPLCAEN.

Belongs to the class-II aminoacyl-tRNA synthetase family. In terms of assembly, tetramer of two alpha and two beta subunits.

It is found in the cytoplasm. It catalyses the reaction tRNA(Gly) + glycine + ATP = glycyl-tRNA(Gly) + AMP + diphosphate. The protein is Glycine--tRNA ligase alpha subunit of Prochlorococcus marinus (strain NATL2A).